A 479-amino-acid polypeptide reads, in one-letter code: UDP-N-acetylmuramate--L-alanine ligase (479 aa).

Residue 127 to 133 (GTHGKTT) participates in ATP binding.

This sequence belongs to the MurCDEF family.

It localises to the cytoplasm. The catalysed reaction is UDP-N-acetyl-alpha-D-muramate + L-alanine + ATP = UDP-N-acetyl-alpha-D-muramoyl-L-alanine + ADP + phosphate + H(+). It participates in cell wall biogenesis; peptidoglycan biosynthesis. Its function is as follows. Cell wall formation. The protein is UDP-N-acetylmuramate--L-alanine ligase of Shewanella denitrificans (strain OS217 / ATCC BAA-1090 / DSM 15013).